The following is a 187-amino-acid chain: ECF RNA polymerase sigma factor SigK (187 aa).

The interval 30–96 (YDHTKSRVYG…RAVDRVRCEQ (67 aa)) is sigma-70 factor domain-2. An Interaction with polymerase core subunit RpoC motif is present at residues 53–56 (ETTQ). A sigma-70 factor domain-4 region spans residues 133-182 (CLKALTDTQRQCIELAYYGGLTYVEVSRRLAANLSTIKSRMRDALRSLRN). Residues 155-174 (YVEVSRRLAANLSTIKSRMR) constitute a DNA-binding region (H-T-H motif).

The protein belongs to the sigma-70 factor family. ECF subfamily. As to quaternary structure, interacts transiently with the RNA polymerase catalytic core formed by RpoA, RpoB, RpoC and RpoZ (2 alpha, 1 beta, 1 beta' and 1 omega subunit) to form the RNA polymerase holoenzyme that can initiate transcription. Interacts (via sigma-70 factor domain 4) with anti-sigma-K factor RskA.

Functionally, sigma factors are initiation factors that promote the attachment of RNA polymerase to specific initiation sites and are then released. Extracytoplasmic function (ECF) sigma factors are held in an inactive form by an anti-sigma factor until released by regulated intramembrane proteolysis. This Mycobacterium tuberculosis (strain ATCC 25177 / H37Ra) protein is ECF RNA polymerase sigma factor SigK (sigK).